The chain runs to 299 residues: Bifunctional protein FolD 2 (299 aa).

NADP(+) contacts are provided by residues 168-170 (GRS), S193, and I234.

This sequence belongs to the tetrahydrofolate dehydrogenase/cyclohydrolase family. In terms of assembly, homodimer.

It catalyses the reaction (6R)-5,10-methylene-5,6,7,8-tetrahydrofolate + NADP(+) = (6R)-5,10-methenyltetrahydrofolate + NADPH. It carries out the reaction (6R)-5,10-methenyltetrahydrofolate + H2O = (6R)-10-formyltetrahydrofolate + H(+). Its pathway is one-carbon metabolism; tetrahydrofolate interconversion. Catalyzes the oxidation of 5,10-methylenetetrahydrofolate to 5,10-methenyltetrahydrofolate and then the hydrolysis of 5,10-methenyltetrahydrofolate to 10-formyltetrahydrofolate. The sequence is that of Bifunctional protein FolD 2 from Rhizobium etli (strain ATCC 51251 / DSM 11541 / JCM 21823 / NBRC 15573 / CFN 42).